The primary structure comprises 140 residues: Probable deoxyuridine 5'-triphosphate nucleotidohydrolase (140 aa).

Residues 62-64, 76-79, Arg-130, and 135-136 each bind substrate; these read RSG, GVID, and FG.

It belongs to the dUTPase family. As to quaternary structure, homotrimer. Requires Mg(2+) as cofactor.

The enzyme catalyses dUTP + H2O = dUMP + diphosphate + H(+). It participates in pyrimidine metabolism; dUMP biosynthesis; dUMP from dCTP (dUTP route): step 2/2. In terms of biological role, this enzyme is involved in nucleotide metabolism: it produces dUMP, the immediate precursor of thymidine nucleotides and it decreases the intracellular concentration of dUTP so that uracil cannot be incorporated into DNA. The sequence is that of Probable deoxyuridine 5'-triphosphate nucleotidohydrolase from Schizosaccharomyces pombe (strain 972 / ATCC 24843) (Fission yeast).